The following is a 171-amino-acid chain: S-ribosylhomocysteine lyase (171 aa).

His54, His58, and Cys128 together coordinate Fe cation.

This sequence belongs to the LuxS family. As to quaternary structure, homodimer. Requires Fe cation as cofactor.

The enzyme catalyses S-(5-deoxy-D-ribos-5-yl)-L-homocysteine = (S)-4,5-dihydroxypentane-2,3-dione + L-homocysteine. Its function is as follows. Involved in the synthesis of autoinducer 2 (AI-2) which is secreted by bacteria and is used to communicate both the cell density and the metabolic potential of the environment. The regulation of gene expression in response to changes in cell density is called quorum sensing. Catalyzes the transformation of S-ribosylhomocysteine (RHC) to homocysteine (HC) and 4,5-dihydroxy-2,3-pentadione (DPD). The chain is S-ribosylhomocysteine lyase from Escherichia coli O157:H7.